We begin with the raw amino-acid sequence, 103 residues long: Large ribosomal subunit protein bL21 (103 aa).

It belongs to the bacterial ribosomal protein bL21 family. As to quaternary structure, part of the 50S ribosomal subunit. Contacts protein L20.

Functionally, this protein binds to 23S rRNA in the presence of protein L20. This chain is Large ribosomal subunit protein bL21, found in Mycolicibacterium paratuberculosis (strain ATCC BAA-968 / K-10) (Mycobacterium paratuberculosis).